The primary structure comprises 406 residues: Prenyltransferase phqJ (406 aa).

Residues 1 to 19 are compositionally biased toward polar residues; the sequence is MTVSTESNFPHGASTQKPQ. The interval 1–23 is disordered; the sequence is MTVSTESNFPHGASTQKPQSAEP. A brevianamide F-binding site is contributed by Glu-99. The dimethylallyl diphosphate site is built by Arg-113, Lys-200, and Tyr-202. Position 204 (Tyr-204) interacts with brevianamide F. The dimethylallyl diphosphate site is built by Lys-269, Tyr-271, and Tyr-340.

The protein belongs to the tryptophan dimethylallyltransferase family.

It participates in alkaloid biosynthesis. Prenyltransferase; part of the gene cluster that mediates the biosynthesis of paraherquamide, a fungal indole alkaloid that belongs to a family of natural products containing a characteristic bicyclo[2.2.2]diazaoctane core. The first steps in the biosynthesis of paraherquamide is the production of the beta-methyl-proline precursor from L-isoleucine. They require oxidation of a terminally hydroxylated L-isoleucine to the corresponding aldehyde by enzymes which have still to be identified. Spontaneous cyclization and dehydration would yield the 4-methyl pyrolline-5-carboxylic acid, which is then reduced by the pyrroline-5-carboxylate reductase phqD leading to the beta-methyl-proline precursor. The next step of paraherquamide biosynthesis involves coupling of beta-methyl-proline and L-tryptophan by the bimodular NRPS phqB, to produce a monooxopiperazine intermediate. The reductase (R) domain of phqB utilizes NADPH for hydride transfer to reduce the thioester bond of the T domain-tethered linear dipeptide to a hemithioaminal intermediate, which spontaneously cleaves the C-S bond to release the aldehyde product. This compound undergoes spontaneous cyclization and dehydration to give a dienamine which is reverse prenylated at C-2 by the reverse prenyltransferase phqJ. The other prenyltransferase present in the cluster, phqI may be a redundant gene in the pathway. During biosynthetic assembly, the key step to produce the polycyclic core is catalyzed by the bifunctional reductase and intramolecular [4+2] Diels-Alderase, phqE, resulting in formation of the [2.2.2] diazaoctane intermediate preparaherquamide. Following formation of preparaherquamide, an indole 2,3-epoxidation-initiated pinacol-like rearrangement is catalyzed by the phqK FAD-dependent monooxygenase. The prenyltransferase phqA, the cytochrome P450 monooxygenase phqL, and the FAD-linked oxidoreductase phqH (or the cytochrome P450 monooxygenase phqM), are proposed to be involved in the formation of the pyran ring. The FAD-dependent monooxygenase phqK is likely responsible for generation of the spiro-oxindole, and the N-methylation is likely mediated by the phqN methyltransferase leading to the isolable natural product paraherquamide F. However, the order of these biosynthetic steps has still to be determined. In late-stage paraherquamide biosynthesis, the third P450 monooxygenase, phqO, is probably responsible for the C-14 hydroxylation, transforming paraherquamide F to paraherquamide G, and paraherquamide E to the final product paraherquamide A. The expansion from the 6-membered ring pyran (in paraherquamides F and G) to the 7-membered dioxepin ring (in paraherquamides A and E) represents a poorly understood but intriguing process that probably involves the 2-oxoglutarate-dependent dioxygenase phqC. Finally, the remaining members of the paraherquamide cluster, including phqI as well as phqM (or phqH), do not have a clearly prescribed role and appear to be redundant. This Penicillium fellutanum protein is Prenyltransferase phqJ.